Here is a 228-residue protein sequence, read N- to C-terminus: Ribosomal RNA small subunit methyltransferase G (228 aa).

S-adenosyl-L-methionine is bound by residues G82, L87, D105–T107, V133–E134, and R147.

This sequence belongs to the methyltransferase superfamily. RNA methyltransferase RsmG family.

The protein localises to the cytoplasm. Its function is as follows. Specifically methylates the N7 position of a guanine in 16S rRNA. The polypeptide is Ribosomal RNA small subunit methyltransferase G (Pelodictyon phaeoclathratiforme (strain DSM 5477 / BU-1)).